The chain runs to 339 residues: DNA-directed RNA polymerase subunit alpha (339 aa).

The interval 1-233 (MVREEVAGST…DLFLPFLHAE (233 aa)) is alpha N-terminal domain (alpha-NTD). The interval 264–339 (KKGIPLNCIF…IDLLKNKLSF (76 aa)) is alpha C-terminal domain (alpha-CTD).

The protein belongs to the RNA polymerase alpha chain family. As to quaternary structure, in plastids the minimal PEP RNA polymerase catalytic core is composed of four subunits: alpha, beta, beta', and beta''. When a (nuclear-encoded) sigma factor is associated with the core the holoenzyme is formed, which can initiate transcription.

The protein resides in the plastid. It localises to the chloroplast. It carries out the reaction RNA(n) + a ribonucleoside 5'-triphosphate = RNA(n+1) + diphosphate. Its function is as follows. DNA-dependent RNA polymerase catalyzes the transcription of DNA into RNA using the four ribonucleoside triphosphates as substrates. This chain is DNA-directed RNA polymerase subunit alpha, found in Psathyrostachys fragilis (Russian wild rye).